Reading from the N-terminus, the 908-residue chain is WD repeat-containing protein 44 (908 aa).

The binding activity stretch occupies residues 1 to 163; the sequence is MMPLKMCTWG…SSADQLDASK (163 aa). A phosphoserine mark is found at Ser-17, Ser-40, Ser-61, Ser-71, Ser-86, and Ser-116. Composition is skewed to polar residues over residues 108–120 and 148–157; these read QQGS…QNAA and NNLTEVSSAD. 5 disordered regions span residues 108–158, 202–273, 309–341, 391–418, and 454–474; these read QQGS…SADQ, APAK…KDNI, TAQE…RELT, VSND…RLKQ, and DEVF…GMPY. 2 positions are modified to phosphothreonine: Thr-151 and Thr-211. Positions 203–249 are important for interaction with ARHGAP26 AND ARHGAP10; sequence PAKPPRHLTPEPDIVASTKKPVPARPPPPTNFPPPRPPPPSRPAPPP. Residues 225–248 are compositionally biased toward pro residues; the sequence is PARPPPPTNFPPPRPPPPSRPAPP. Ser-254 is subject to Phosphoserine. Residues 254 to 270 are compositionally biased toward basic and acidic residues; sequence SDLEFEALKTPDLDVPK. Residue Thr-263 is modified to Phosphothreonine. The interval 326-339 is important for interaction with RAB11A; sequence VMGPQRPRSNSGRE. Ser-334 and Ser-336 each carry phosphoserine. Thr-341 and Thr-396 each carry phosphothreonine. Phosphoserine occurs at positions 398, 465, 466, and 467. The segment covering 462–471 has biased composition (acidic residues); the sequence is DDPSSSDDEG. At Tyr-474 the chain carries Phosphotyrosine. A WD 1 repeat occupies 504 to 543; that stretch reads EHMGAVWTMKFSHCGRLLASAGQDNIVRIWALKNAFDYFN. The interval 552-587 is disordered; it reads EGRVSPSPSQESLSSSKSDTDMGVCSGTDEDPDDKN. Phosphoserine occurs at positions 556 and 560. Residues 556-568 are compositionally biased toward low complexity; that stretch reads SPSPSQESLSSSK. WD repeat units lie at residues 600 to 638, 640 to 680, 685 to 724, 735 to 774, and 779 to 818; these read GHTA…CLCC, QHID…VALW, GQTK…YHTQ, KVGR…LSMK, and VNSS…SKFT.

Interacts preferentially with the GTP-bound form of RAB11 when membrane-associated. Interacts with GRAF1/ARHGAP26 or GRAF2/ARHGAP10; the interaction connects the endoplasmic reticulum (ER) with the endosomal tubule. Interacts with VAPA (via MSP domain) or VAPB (via MSP domain); the interaction connects the ER with the endosomal tubule. Does not bind to other Rab and Rho small G proteins. In terms of processing, phosphorylated by ATK1; the phosphorylation stabilizes its interaction with RAB11A and RAB11B. In terms of tissue distribution, expressed in heart; brain; spleen; lung; liver; muscle and kidney.

The protein localises to the cytoplasm. It is found in the cytosol. Its subcellular location is the perinuclear region. It localises to the endosome membrane. The protein resides in the golgi apparatus. The protein localises to the trans-Golgi network. In terms of biological role, downstream effector for Rab11 which regulates Rab11 intracellular membrane trafficking functions such as endocytic recycling, intracellular ciliogenesis and protein export. ATK1-mediated phosphorylation of WDR44 induces binding to Rab11 which activates endocytic recycling of transferrin receptor back to the plasma membrane. When bound to Rab11, prevents the formation of the ciliogenic Rab11-Rabin8/RAB3IP-RAB11FIP3 complex, therefore inhibiting preciliary trafficking and ciliogenesis. May participate in neo-synthesized protein export by connecting the endoplasmic reticulum (ER) with the endosomal tubule via direct interactions with the integral ER proteins VAPA or VAPB and the endosomal protein GRAFs (GRAF1/ARHGAP26 or GRAF2/ARHGAP10), which facilitates the transfer of proteins such as E-cadherin, MPP14 and CFTR into a Rab8-Rab10-Rab11-dependent export route. The polypeptide is WD repeat-containing protein 44 (Rattus norvegicus (Rat)).